Reading from the N-terminus, the 473-residue chain is Ribulose bisphosphate carboxylase large chain 1 (473 aa).

The substrate site is built by Asn116 and Thr166. Lys168 (proton acceptor) is an active-site residue. Lys170 is a substrate binding site. Mg(2+) contacts are provided by Lys194, Asp196, and Glu197. Lys194 is subject to N6-carboxylysine. His287 functions as the Proton acceptor in the catalytic mechanism. Positions 288, 320, and 372 each coordinate substrate.

Belongs to the RuBisCO large chain family. Type I subfamily. As to quaternary structure, heterohexadecamer of 8 large chains and 8 small chains. Requires Mg(2+) as cofactor.

It catalyses the reaction 2 (2R)-3-phosphoglycerate + 2 H(+) = D-ribulose 1,5-bisphosphate + CO2 + H2O. The catalysed reaction is D-ribulose 1,5-bisphosphate + O2 = 2-phosphoglycolate + (2R)-3-phosphoglycerate + 2 H(+). In terms of biological role, ruBisCO catalyzes two reactions: the carboxylation of D-ribulose 1,5-bisphosphate, the primary event in carbon dioxide fixation, as well as the oxidative fragmentation of the pentose substrate. Both reactions occur simultaneously and in competition at the same active site. The protein is Ribulose bisphosphate carboxylase large chain 1 of Nitrobacter winogradskyi (strain ATCC 25391 / DSM 10237 / CIP 104748 / NCIMB 11846 / Nb-255).